Here is a 596-residue protein sequence, read N- to C-terminus: Zinc finger CCCH domain-containing protein 64 (596 aa).

2 disordered regions span residues 243 to 263 (LSPTPTSTMSPAELSAKPPKT) and 272 to 291 (DGAAESKKRPNDSDSDSQYW). C3H1-type zinc fingers lie at residues 303-331 (SQGEKLCFKFVCSGSCPRGEDCHFQHNAE) and 335-363 (QCRRGVCLDLIIKGKCEKGPECSYKHEFQ).

The chain is Zinc finger CCCH domain-containing protein 64 from Arabidopsis thaliana (Mouse-ear cress).